The following is a 462-amino-acid chain: NAD-capped RNA hydrolase NUDT12 (462 aa).

3 ANK repeats span residues 11–40 (EIVT…SLLN), 45–74 (NGWT…DRSI), and 78–98 (SRQT…ANLL). Position 185 is an N6-succinyllysine (lysine 185). The Zn(2+) site is built by cysteine 284 and cysteine 287. The residue at position 292 (lysine 292) is an N6-succinyllysine. Zn(2+)-binding residues include cysteine 302 and cysteine 307. Residues tyrosine 318, 354–356 (AGF), glutamate 370, glutamate 374, and glutamate 415 each bind substrate. Residues 319-453 (PRVDPVVIMQ…SRAIAHQLIK (135 aa)) form the Nudix hydrolase domain. Mg(2+)-binding residues include alanine 354, glutamate 370, glutamate 374, and glutamate 415. The short motif at 355-376 (GFIEPGETIEDAVRREVEEESG) is the Nudix box element. The short motif at 460 to 462 (PNL) is the Microbody targeting signal element.

It belongs to the Nudix hydrolase family. NudC subfamily. Homodimer. Homodimerization is essential for its catalytic activity and protein stability. Interacts (via ANK repeats) with BLMH. Requires Mg(2+) as cofactor. Zn(2+) is required as a cofactor.

It localises to the cytoplasm. The protein localises to the peroxisome. It is found in the cytoplasmic granule. The catalysed reaction is a 5'-end NAD(+)-phospho-ribonucleoside in mRNA + H2O = a 5'-end phospho-adenosine-phospho-ribonucleoside in mRNA + beta-nicotinamide D-ribonucleotide + 2 H(+). The enzyme catalyses NAD(+) + H2O = beta-nicotinamide D-ribonucleotide + AMP + 2 H(+). It catalyses the reaction NADH + H2O = reduced beta-nicotinamide D-ribonucleotide + AMP + 2 H(+). It carries out the reaction NADPH + H2O = reduced beta-nicotinamide D-ribonucleotide + adenosine 2',5'-bisphosphate + 2 H(+). In terms of biological role, mRNA decapping enzyme that specifically removes the nicotinamide adenine dinucleotide (NAD) cap from a subset of mRNAs by hydrolyzing the diphosphate linkage to produce nicotinamide mononucleotide (NMN) and 5' monophosphate mRNA. The NAD-cap is present at the 5'-end of some RNAs; in contrast to the canonical N7 methylguanosine (m7G) cap, the NAD cap promotes mRNA decay. Preferentially acts on NAD-capped transcripts in response to nutrient stress. Also acts on free nicotinamide adenine dinucleotide molecules: hydrolyzes NAD(H) into NMN(H) and AMP, and NADPH into NMNH and 2',5'-ADP. May act to regulate the concentration of peroxisomal nicotinamide nucleotide cofactors required for oxidative metabolism in this organelle. Regulates the levels of circadian clock components PER1, PER2, PER3 and CRY2 in the liver. This Pongo abelii (Sumatran orangutan) protein is NAD-capped RNA hydrolase NUDT12.